A 680-amino-acid chain; its full sequence is Oligopeptidase A (680 aa).

H469 contacts Zn(2+). E470 is a catalytic residue. H473 and H476 together coordinate Zn(2+).

This sequence belongs to the peptidase M3 family. Requires Zn(2+) as cofactor.

The enzyme catalyses Hydrolysis of oligopeptides, with broad specificity. Gly or Ala commonly occur as P1 or P1' residues, but more distant residues are also important, as is shown by the fact that Z-Gly-Pro-Gly-|-Gly-Pro-Ala is cleaved, but not Z-(Gly)(5).. In terms of biological role, may play a specific role in the degradation of signal peptides after they are released from precursor forms of secreted proteins. Can cleave N-acetyl-L-Ala(4). This Escherichia coli (strain K12) protein is Oligopeptidase A (prlC).